The chain runs to 203 residues: Elongation factor Ts (203 aa).

Positions 80–83 (TDFV) are involved in Mg(2+) ion dislocation from EF-Tu.

The protein belongs to the EF-Ts family.

The protein resides in the cytoplasm. Its function is as follows. Associates with the EF-Tu.GDP complex and induces the exchange of GDP to GTP. It remains bound to the aminoacyl-tRNA.EF-Tu.GTP complex up to the GTP hydrolysis stage on the ribosome. This Moorella thermoacetica (strain ATCC 39073 / JCM 9320) protein is Elongation factor Ts.